The primary structure comprises 415 residues: Methylthioribose-1-phosphate isomerase (415 aa).

The active-site Proton donor is aspartate 284.

It belongs to the eIF-2B alpha/beta/delta subunits family. MtnA subfamily.

It is found in the cytoplasm. It localises to the nucleus. It catalyses the reaction 5-(methylsulfanyl)-alpha-D-ribose 1-phosphate = 5-(methylsulfanyl)-D-ribulose 1-phosphate. It participates in amino-acid biosynthesis; L-methionine biosynthesis via salvage pathway; L-methionine from S-methyl-5-thio-alpha-D-ribose 1-phosphate: step 1/6. Functionally, catalyzes the interconversion of methylthioribose-1-phosphate (MTR-1-P) into methylthioribulose-1-phosphate (MTRu-1-P). In Vanderwaltozyma polyspora (strain ATCC 22028 / DSM 70294 / BCRC 21397 / CBS 2163 / NBRC 10782 / NRRL Y-8283 / UCD 57-17) (Kluyveromyces polysporus), this protein is Methylthioribose-1-phosphate isomerase.